We begin with the raw amino-acid sequence, 844 residues long: MEPPAAPSERSLSLSLPGPREGQATLKPPPQHLWRQPRTPIRIQQRGYSDSAERSEPERSPHRPIERADAVDTGDRPGLRTTRMSWPSSFHGTGTGGGSSRRLEAENGPTPSPGRSPLDSQASPGLMLHAGAATSQRRESFLYRSDSDYDMSPKTMSRNSSVASEAHGEDLIVTPFAQVLASLRNVRSNFSLLTNVPIPSNKRSPLGGPPSVCKATLSEETCQQLARETLEELDWCLEQLETMQTYRSVSEMASHKFKRMLNRELTHLSEMSRSGNQVSEYISNTFLDKQHEVEIPSPTPRQRPFQQPPPAAVQQAQPMSQITGLKKLVHTGSLNINVPRFGVKTDQEDLLAQELENLSKWGLNIFCVSEYAGGRSLSCIMYTIFQERDLLKKFHIPVDTMMTYMLTLEDHYHADVAYHNSLHAADVLQSTHVLLATPALDAVFTDLEILAALFAAAIHDVDHPGVSNQFLINTNSELALMYNDESVLENHHLAVGFKLLQEENCDIFQNLSKRQRQSLRKMVIDMVLATDMSKHMTLLADLKTMVETKKVTSSGVLLLDNYSDRIQVLRNMVHCADLSNPTKPLELYRQWTDRIMAEFFQQGDRERERGMEISPMCDKHTASVEKSQVGFIDYIVHPLWETWADLVHPDAQDILDTLEDNRDWYHSAIRQSPSPTLEEEPGVLSDPALPDKFQFELTLEEEDEEDSLEVPGLPCTEETLLAPHDTRAQAMEQSKVKGQSPAVVEVAESLKQETASAHGAPEESAEAVGHSFSLETSILPDLRTLSPSEEAQGLLGLPSMAAEVEAPRDHLAAMRACSACSGTSGDNSAVISAPGRWGSGGDPA.

Positions 1 to 124 are disordered; that stretch reads MEPPAAPSER…RSPLDSQASP (124 aa). Serine 13 carries the post-translational modification Phosphoserine. The segment covering 36 to 46 has biased composition (low complexity); the sequence is QPRTPIRIQQR. The span at 51–78 shows a compositional bias: basic and acidic residues; the sequence is SAERSEPERSPHRPIERADAVDTGDRPG. A compositionally biased stretch (polar residues) spans 82-91; that stretch reads TRMSWPSSFH. A phosphoserine mark is found at serine 147, serine 152, serine 160, serine 204, and serine 333. The 330-residue stretch at 343–672 folds into the PDEase domain; it reads VKTDQEDLLA…DWYHSAIRQS (330 aa). Lysine 344 is covalently cross-linked (Glycyl lysine isopeptide (Lys-Gly) (interchain with G-Cter in SUMO)). The Proton donor role is filled by histidine 419. Histidine 419 contributes to the 3',5'-cyclic AMP binding site. AMP contacts are provided by histidine 419 and histidine 423. Histidine 423, histidine 459, aspartate 460, and aspartate 577 together coordinate Zn(2+). Positions 460, 577, 628, and 631 each coordinate AMP. Aspartate 460 contributes to the Mg(2+) binding site. Aspartate 460 contacts Mn(2+). Residues glutamine 628 and phenylalanine 631 each coordinate 3',5'-cyclic AMP. 2 positions are modified to phosphoserine: serine 672 and serine 674. The interval 819-844 is disordered; the sequence is ACSGTSGDNSAVISAPGRWGSGGDPA. Polar residues predominate over residues 820–830; the sequence is CSGTSGDNSAV.

It belongs to the cyclic nucleotide phosphodiesterase family. PDE4 subfamily. In terms of assembly, interacts with LYN (via SH3 domain). Interacts with ARRB2. Zn(2+) serves as cofactor. Mg(2+) is required as a cofactor. The cofactor is Mn(2+). In terms of processing, proteolytically cleaved by CASP3.

It is found in the cytoplasm. The protein localises to the cytosol. Its subcellular location is the membrane. The catalysed reaction is 3',5'-cyclic AMP + H2O = AMP + H(+). Its pathway is purine metabolism; 3',5'-cyclic AMP degradation; AMP from 3',5'-cyclic AMP: step 1/1. With respect to regulation, inhibited by rolipram and diazepam. Functionally, hydrolyzes the second messenger 3',5'-cyclic AMP (cAMP), which is a key regulator of many important physiological processes. In terms of biological role, efficiently hydrolyzes cAMP. The protein is 3',5'-cyclic-AMP phosphodiesterase 4A (Pde4a) of Mus musculus (Mouse).